Consider the following 414-residue polypeptide: Methyltransferase-like protein 2 (414 aa).

A disordered region spans residues 56-77 (LNQHSSESNPKKRKRKQKNSSF).

This sequence belongs to the MT-A70-like family.

In terms of biological role, probable methyltransferase. This Arabidopsis thaliana (Mouse-ear cress) protein is Methyltransferase-like protein 2.